The sequence spans 216 residues: MAYPGKKSKSFETPRHPWQEARMASEVQLVKAYGLRNKREVWKAASTLRMYRSEARRLLASAANSQERGLEGHQKTQSEEILAKLIRYGIIKSDADIDDILSLKTENILERRLQTQVLRLGLARTVVQARQFITHGHIAINGRKATVPGMLVSKEDEMHIGYYATSPLVSESHPERPVQVASVLADSTTTLRAVAEAKQAKEKPPERGGRKRRGRR.

Residues arginine 111 to glutamate 175 enclose the S4 RNA-binding domain. The disordered stretch occupies residues valine 194–arginine 216. Positions lysine 198–glycine 208 are enriched in basic and acidic residues.

It belongs to the universal ribosomal protein uS4 family. As to quaternary structure, part of the 30S ribosomal subunit. Contacts protein S5. The interaction surface between S4 and S5 is involved in control of translational fidelity.

Functionally, one of the primary rRNA binding proteins, it binds directly to 16S rRNA where it nucleates assembly of the body of the 30S subunit. Its function is as follows. With S5 and S12 plays an important role in translational accuracy. In Methanosarcina barkeri (strain Fusaro / DSM 804), this protein is Small ribosomal subunit protein uS4.